Here is a 323-residue protein sequence, read N- to C-terminus: tRNA N6-adenosine threonylcarbamoyltransferase (323 aa).

Fe cation contacts are provided by histidine 110 and histidine 114. Residues 131-135, aspartate 164, glycine 177, and asparagine 264 each bind substrate; that span reads VASGG. Aspartate 288 is a binding site for Fe cation.

This sequence belongs to the KAE1 / TsaD family. Requires Fe(2+) as cofactor.

The protein resides in the cytoplasm. The catalysed reaction is L-threonylcarbamoyladenylate + adenosine(37) in tRNA = N(6)-L-threonylcarbamoyladenosine(37) in tRNA + AMP + H(+). In terms of biological role, required for the formation of a threonylcarbamoyl group on adenosine at position 37 (t(6)A37) in tRNAs that read codons beginning with adenine. Is involved in the transfer of the threonylcarbamoyl moiety of threonylcarbamoyl-AMP (TC-AMP) to the N6 group of A37, together with TsaE and TsaB. TsaD likely plays a direct catalytic role in this reaction. This is tRNA N6-adenosine threonylcarbamoyltransferase from Thermus thermophilus (strain ATCC BAA-163 / DSM 7039 / HB27).